The primary structure comprises 285 residues: Protein phosphatase 1 regulatory subunit 3B (285 aa).

Residues 62–65 (RVSF) carry the PP1-binding motif motif. Residues 125-233 (RNRLQADHVC…SNRGKNYRII (109 aa)) enclose the CBM21 domain. Serine 261 carries the phosphoserine modification.

In terms of assembly, interacts with glycogen, PPP1CC catalytic subunit of PP1 and PYGL. Associates with glycogen particles. Forms complexes with debranching enzyme, glycogen phosphorylase, glycogen synthase and phosphorylase kinase which is necessary for its regulation of PP1 activity. In terms of tissue distribution, highly expressed in the liver and, at lower levels, in skeletal muscle, including in vastus lateralis, gastrocnemius and soleus (at protein level). Highest mRNA levels are observed in skeletal muscle, and only moderate levels in liver and heart. Weak expression in placenta and lung.

Its function is as follows. Acts as a glycogen-targeting subunit for phosphatase PP1. Facilitates interaction of the PP1 with enzymes of the glycogen metabolism and regulates its activity. Suppresses the rate at which PP1 dephosphorylates (inactivates) glycogen phosphorylase and enhances the rate at which it activates glycogen synthase and therefore limits glycogen breakdown. Its activity is inhibited by PYGL, resulting in inhibition of the glycogen synthase and glycogen phosphorylase phosphatase activities of PP1. Dramatically increases basal and insulin-stimulated glycogen synthesis upon overexpression in hepatocytes. This chain is Protein phosphatase 1 regulatory subunit 3B (PPP1R3B), found in Homo sapiens (Human).